The primary structure comprises 118 residues: Small ribosomal subunit protein uS13 (118 aa).

The tract at residues Gly-94–Lys-118 is disordered.

The protein belongs to the universal ribosomal protein uS13 family. As to quaternary structure, part of the 30S ribosomal subunit. Forms a loose heterodimer with protein S19. Forms two bridges to the 50S subunit in the 70S ribosome.

Located at the top of the head of the 30S subunit, it contacts several helices of the 16S rRNA. In the 70S ribosome it contacts the 23S rRNA (bridge B1a) and protein L5 of the 50S subunit (bridge B1b), connecting the 2 subunits; these bridges are implicated in subunit movement. Contacts the tRNAs in the A and P-sites. The protein is Small ribosomal subunit protein uS13 of Shigella dysenteriae serotype 1 (strain Sd197).